Consider the following 439-residue polypeptide: MNKYFENVSKIKYEGPKSNNPYSFKFYNPEEVIDGKTMEEHLRFSIAYWHTFTADGTDQFGKATMQRPWNHYTDPMDIAKRRVEAAFEFFDKINAPFFCFHDRDIAPEGDTLRETNKNLDTIVAMIKDYLKTSKTKVLWGTANLFSNPRFVHGASTSCNADVFAYSAAQVKKALEITKELGRENYVFWGGREGYETLLNTDMELELDNFARFLHMAVDYAKEIGFEGQFLIEPKPKEPTKHQYDFDVANVLAFLRKYDLDKYFKVNIEANHATLAFHDFQHELRYARINGVLGSIDANTGDMLLGWDTDQFPTDIRMTTLAMYEVIKMGGFDKGGLNFDAKVRRASFEPEDLFLGHIAGMDAFAKGFKVAYKLVKDGVFDKFIEERYASYKEGIGADIVSGKADFKSLEKYALEHSQIVNKSGRQELLESILNQYLFAE.

Catalysis depends on residues His-101 and Asp-104. Residues Glu-232, Glu-268, His-271, Asp-296, Asp-307, Asp-309, and Asp-339 each coordinate Mg(2+).

The protein belongs to the xylose isomerase family. Homotetramer. Requires Mg(2+) as cofactor.

It localises to the cytoplasm. The enzyme catalyses alpha-D-xylose = alpha-D-xylulofuranose. This chain is Xylose isomerase (xylA), found in Thermoanaerobacterium saccharolyticum.